Here is a 473-residue protein sequence, read N- to C-terminus: MVYENPDGVMVGLEVHVQLNNLNTKMFCGCSTQYHDSEPNTHVCPVCMGLPGALPVINKRAVESAIKIGMALNCEVVEQTQFHRKNYYYPDLPKGFQTTQYDFPIVGNGKVVIEGEDGEHVVRITRAHMEEDPGKLVHIGSIDKSKGTLIDYNRSGMALIEIVSEPDMRSPKEARRYLDKLRNILDYLDVFNGDLEGSMRVDANVSVMGGQRAEVKNISSHKGAERAILYEIMRQKNLLRRGGEVVMETRHFDEARGVTISMRTKEGEHDYRYFPEPDLVPMRVSDWAPAIREELPELPDAKRARLISEYDITEMHAKALTSDIRVADFYEVVAAAVEPRVAGTWVADVLKGELNYRDLSVDSFTTDDIIQIIKLVVEDKVTEQSAVDVIRTILDDGGTPMEVVTEKGLLKVKGDVVTEAVSETIAENEAAVQDYLGGAEKSLNFLVGQVMKKTKGRADARQARELLVAALKS.

It belongs to the GatB/GatE family. GatB subfamily. In terms of assembly, heterotrimer of A, B and C subunits.

It carries out the reaction L-glutamyl-tRNA(Gln) + L-glutamine + ATP + H2O = L-glutaminyl-tRNA(Gln) + L-glutamate + ADP + phosphate + H(+). The enzyme catalyses L-aspartyl-tRNA(Asn) + L-glutamine + ATP + H2O = L-asparaginyl-tRNA(Asn) + L-glutamate + ADP + phosphate + 2 H(+). In terms of biological role, allows the formation of correctly charged Asn-tRNA(Asn) or Gln-tRNA(Gln) through the transamidation of misacylated Asp-tRNA(Asn) or Glu-tRNA(Gln) in organisms which lack either or both of asparaginyl-tRNA or glutaminyl-tRNA synthetases. The reaction takes place in the presence of glutamine and ATP through an activated phospho-Asp-tRNA(Asn) or phospho-Glu-tRNA(Gln). This is Aspartyl/glutamyl-tRNA(Asn/Gln) amidotransferase subunit B from Methanococcoides burtonii (strain DSM 6242 / NBRC 107633 / OCM 468 / ACE-M).